The following is a 227-amino-acid chain: Cytochrome c oxidase subunit 2 (227 aa).

Over 1–14 (MAYPFQLGLQDATS) the chain is Mitochondrial intermembrane. The chain crosses the membrane as a helical span at residues 15-45 (PIMEELMNFHDHTLMIVFLISTLVLYIISLM). Over 46–59 (LTTKLTHTSTMDAQ) the chain is Mitochondrial matrix. The chain crosses the membrane as a helical span at residues 60-87 (EVETIWTILPAVILILIALPSLRILYMM). Residues 88-227 (DEINNPALTV…YFENWSASMI (140 aa)) are Mitochondrial intermembrane-facing. Residues His-161, Cys-196, Glu-198, Cys-200, His-204, and Met-207 each contribute to the Cu cation site. Glu-198 is a binding site for Mg(2+). Tyr-218 is subject to Phosphotyrosine.

Belongs to the cytochrome c oxidase subunit 2 family. Component of the cytochrome c oxidase (complex IV, CIV), a multisubunit enzyme composed of 14 subunits. The complex is composed of a catalytic core of 3 subunits MT-CO1, MT-CO2 and MT-CO3, encoded in the mitochondrial DNA, and 11 supernumerary subunits COX4I, COX5A, COX5B, COX6A, COX6B, COX6C, COX7A, COX7B, COX7C, COX8 and NDUFA4, which are encoded in the nuclear genome. The complex exists as a monomer or a dimer and forms supercomplexes (SCs) in the inner mitochondrial membrane with NADH-ubiquinone oxidoreductase (complex I, CI) and ubiquinol-cytochrome c oxidoreductase (cytochrome b-c1 complex, complex III, CIII), resulting in different assemblies (supercomplex SCI(1)III(2)IV(1) and megacomplex MCI(2)III(2)IV(2)). Found in a complex with TMEM177, COA6, COX18, COX20, SCO1 and SCO2. Interacts with TMEM177 in a COX20-dependent manner. Interacts with COX20. Interacts with COX16. Cu cation serves as cofactor.

The protein resides in the mitochondrion inner membrane. It catalyses the reaction 4 Fe(II)-[cytochrome c] + O2 + 8 H(+)(in) = 4 Fe(III)-[cytochrome c] + 2 H2O + 4 H(+)(out). Component of the cytochrome c oxidase, the last enzyme in the mitochondrial electron transport chain which drives oxidative phosphorylation. The respiratory chain contains 3 multisubunit complexes succinate dehydrogenase (complex II, CII), ubiquinol-cytochrome c oxidoreductase (cytochrome b-c1 complex, complex III, CIII) and cytochrome c oxidase (complex IV, CIV), that cooperate to transfer electrons derived from NADH and succinate to molecular oxygen, creating an electrochemical gradient over the inner membrane that drives transmembrane transport and the ATP synthase. Cytochrome c oxidase is the component of the respiratory chain that catalyzes the reduction of oxygen to water. Electrons originating from reduced cytochrome c in the intermembrane space (IMS) are transferred via the dinuclear copper A center (CU(A)) of subunit 2 and heme A of subunit 1 to the active site in subunit 1, a binuclear center (BNC) formed by heme A3 and copper B (CU(B)). The BNC reduces molecular oxygen to 2 water molecules using 4 electrons from cytochrome c in the IMS and 4 protons from the mitochondrial matrix. This Maxomys surifer (Indomalayan maxomys) protein is Cytochrome c oxidase subunit 2 (MT-CO2).